Consider the following 238-residue polypeptide: DNA damage-regulated autophagy modulator protein 1 (238 aa).

Helical transmembrane passes span 9-29 (AFVPFLLVTWSSAAFIISYVV), 53-73 (SGIFGFMINFSAFLGAATMYT), 91-111 (VFNLVSLVLGLVGCFGMGIVA), 116-136 (LAVPVVHDGGALLAFVCGVVY), 161-181 (MVISAVSCAAVIPMIVCASLI), and 200-220 (VSAICEWTVAFGFIFYFLTFI).

Belongs to the DRAM/TMEM150 family.

The protein localises to the lysosome membrane. Functionally, lysosomal modulator of autophagy that plays a central role in p53/TP53-mediated apoptosis. Not involved in p73/TP73-mediated autophagy. The chain is DNA damage-regulated autophagy modulator protein 1 (DRAM1) from Homo sapiens (Human).